A 201-amino-acid chain; its full sequence is Adenylyl-sulfate kinase (201 aa).

Residue 35-42 participates in ATP binding; that stretch reads GLSGSGKS. Serine 109 functions as the Phosphoserine intermediate in the catalytic mechanism.

This sequence belongs to the APS kinase family.

The catalysed reaction is adenosine 5'-phosphosulfate + ATP = 3'-phosphoadenylyl sulfate + ADP + H(+). Its pathway is sulfur metabolism; hydrogen sulfide biosynthesis; sulfite from sulfate: step 2/3. In terms of biological role, catalyzes the synthesis of activated sulfate. This is Adenylyl-sulfate kinase from Prochlorococcus marinus (strain SARG / CCMP1375 / SS120).